Consider the following 801-residue polypeptide: Ferredoxin:CoB-CoM heterodisulfide reductase subunit A (801 aa).

Residue 149 to 172 participates in FAD binding; it reads GGGIAGITAALNLADNGVSTVLVE. 2 4Fe-4S ferredoxin-type domains span residues 239–269 and 285–320; these read KKPR…FNCG and PKIY…FSQK. Positions 248, 251, 254, 258, 295, 303, 306, and 310 each coordinate [4Fe-4S] cluster. The disordered stretch occupies residues 382 to 409; it reads FSKASSDPTPATCDSRCEDSSDESQGTD. 4Fe-4S ferredoxin-type domains lie at 606–634 and 635–664; these read EIAT…VNES and GRVV…IAGF. C615, C618, C621, C624, C644, C647, C650, and C654 together coordinate [4Fe-4S] cluster.

This sequence belongs to the HdrA family. In terms of assembly, the ferredoxin:CoB-CoM heterodisulfide reductase is composed of three subunits; HdrA1, HdrB1 and HdrC1. [4Fe-4S] cluster is required as a cofactor. FAD serves as cofactor.

The protein resides in the cytoplasm. The enzyme catalyses coenzyme B + coenzyme M + 2 oxidized [2Fe-2S]-[ferredoxin] = coenzyme M-coenzyme B heterodisulfide + 2 reduced [2Fe-2S]-[ferredoxin] + 2 H(+). It participates in cofactor metabolism; coenzyme M-coenzyme B heterodisulfide reduction; coenzyme B and coenzyme M from coenzyme M-coenzyme B heterodisulfide: step 1/1. Its function is as follows. Part of a complex that catalyzes the reversible reduction of CoM-S-S-CoB to the thiol-coenzymes H-S-CoM (coenzyme M) and H-S-CoB (coenzyme B). Probably involved in methylotrophic methanogenesis but not in aceticlastic methanogenesis. This is Ferredoxin:CoB-CoM heterodisulfide reductase subunit A from Methanosarcina acetivorans (strain ATCC 35395 / DSM 2834 / JCM 12185 / C2A).